Here is a 783-residue protein sequence, read N- to C-terminus: Probable potassium transporter 2 (783 aa).

The Cytoplasmic portion of the chain corresponds to 1 to 21; the sequence is MDAEAGVGGADQLPWRQHYRN. Residues 22–42 traverse the membrane as a helical segment; sequence LLLLAYQSFGVVYGDLSTSPL. Residues 43-61 are Extracellular-facing; that stretch reads YVYKSTFSGRLRRYQDEQT. The helical transmembrane segment at 62–82 threads the bilayer; that stretch reads VFGVLSLIFWTFTLIPLLKYV. Residues 83–152 lie on the Cytoplasmic side of the membrane; sequence TIVLSADDNG…FMEKHKNART (70 aa). The helical transmembrane segment at 153 to 173 threads the bilayer; it reads VLLLIVLCGASMMIGDGILTP. Residues 174–189 are Extracellular-facing; it reads AISVLSSMSGLKVRAT. Residues 190-210 traverse the membrane as a helical segment; sequence GLHDRSVVLLSCIVLVGLFAL. Over 211–217 the chain is Cytoplasmic; sequence QHRGTQK. Residues 218–238 traverse the membrane as a helical segment; sequence VAFMFAPIVVIWLFCIGGIGL. Residues 239–268 are Extracellular-facing; it reads YNIIHWNPRIYQALSPYYIVKFFRTTGKDG. The chain crosses the membrane as a helical span at residues 269 to 289; sequence WIALGGILLSMTGCEAMFADL. Topologically, residues 290–298 are cytoplasmic; sequence GHFTSASVR. The chain crosses the membrane as a helical span at residues 299 to 319; the sequence is LAFITIIYPCLILQYMGQAAF. Topologically, residues 320–338 are extracellular; it reads LSKNILDMPTGFYDSIPGP. The helical transmembrane segment at 339–359 threads the bilayer; that stretch reads IFWPVFVVATLAAVVGSQAVI. Residues 360–390 lie on the Cytoplasmic side of the membrane; it reads SATFSIVKQCHSLGCFPRVKVVHTSRWIYGQ. Residues 391–411 traverse the membrane as a helical segment; it reads IYIPEINWILMVLCVAVTVAF. Residues 412–422 lie on the Extracellular side of the membrane; the sequence is RDITLIGNAYG. Residues 423–443 traverse the membrane as a helical segment; that stretch reads VACMTVMFVTTFLMALIMIFV. At 444 to 447 the chain is on the cytoplasmic side; sequence WQKN. Residues 448-468 form a helical membrane-spanning segment; sequence IIFALSFFLLFGSVEVVYLSS. Residues 469–475 are Extracellular-facing; the sequence is SLMKVTQ. A helical transmembrane segment spans residues 476-496; the sequence is GGWVPLVLALIFMSVMYIWHY. Over 497–783 the chain is Cytoplasmic; the sequence is GTRKKYQYDL…LIEVGMAYQV (287 aa). The tract at residues 662–691 is disordered; that stretch reads DLADSMTMRSTKSESLRSLQSSYEQESPNV. The span at 677–691 shows a compositional bias: polar residues; sequence LRSLQSSYEQESPNV.

This sequence belongs to the HAK/KUP transporter (TC 2.A.72.3) family.

The protein localises to the cell membrane. It carries out the reaction K(+)(in) = K(+)(out). The enzyme catalyses Na(+)(in) = Na(+)(out). Its function is as follows. High-affinity potassium transporter. Can transport sodium under high sodium and low potassium concentrations in the extracellular environment. The protein is Probable potassium transporter 2 (HAK2) of Oryza sativa subsp. japonica (Rice).